We begin with the raw amino-acid sequence, 190 residues long: Threonylcarbamoyl-AMP synthase (190 aa).

The region spanning 7–190 (TGSIAAVVDL…ALTGELFRQG (184 aa)) is the YrdC-like domain.

Belongs to the SUA5 family. TsaC subfamily.

It is found in the cytoplasm. The enzyme catalyses L-threonine + hydrogencarbonate + ATP = L-threonylcarbamoyladenylate + diphosphate + H2O. Its function is as follows. Required for the formation of a threonylcarbamoyl group on adenosine at position 37 (t(6)A37) in tRNAs that read codons beginning with adenine. Catalyzes the conversion of L-threonine, HCO(3)(-)/CO(2) and ATP to give threonylcarbamoyl-AMP (TC-AMP) as the acyladenylate intermediate, with the release of diphosphate. The protein is Threonylcarbamoyl-AMP synthase of Salmonella paratyphi A (strain ATCC 9150 / SARB42).